The following is a 457-amino-acid chain: 6-phosphofructo-2-kinase/fructose-2,6-bisphosphatase (457 aa).

The disordered stretch occupies residues 1–20 (MEIPPGLETTKRKVAHSDEH). Positions 1-244 (MEIPPGLETT…VYFLMNIHLL (244 aa)) are 6-phosphofructo-2-kinase. The span at 9–20 (TTKRKVAHSDEH) shows a compositional bias: basic and acidic residues. Position 36–44 (36–44 (GLPARGKTY)) interacts with ATP. Beta-D-fructose 6-phosphate-binding residues include arginine 69 and arginine 98. Aspartate 124 is an active-site residue. Positions 126 and 132 each coordinate beta-D-fructose 6-phosphate. Residue cysteine 154 is part of the active site. ATP is bound at residue 163–168 (NVTDVK). The beta-D-fructose 6-phosphate site is built by lysine 168, arginine 190, and tyrosine 194. The tract at residues 245–457 (PRSIYLTRHG…QLPLCDSPRD (213 aa)) is fructose-2,6-bisphosphatase. Residue arginine 252 participates in beta-D-fructose 2,6-bisphosphate binding. Histidine 253 serves as the catalytic Tele-phosphohistidine intermediate. Beta-D-fructose 2,6-bisphosphate-binding residues include asparagine 259 and glycine 265. The active-site Proton donor/acceptor is glutamate 324. 6 residues coordinate beta-D-fructose 2,6-bisphosphate: tyrosine 335, arginine 349, lysine 353, tyrosine 364, glutamine 390, and arginine 394. ATP is bound at residue 346–349 (ADDR). Residues 390 to 394 (QAVLR) and tyrosine 426 contribute to the ATP site.

This sequence in the C-terminal section; belongs to the phosphoglycerate mutase family.

It catalyses the reaction beta-D-fructose 2,6-bisphosphate + H2O = beta-D-fructose 6-phosphate + phosphate. The catalysed reaction is beta-D-fructose 6-phosphate + ATP = beta-D-fructose 2,6-bisphosphate + ADP + H(+). Functionally, synthesis and degradation of fructose 2,6-bisphosphate. The sequence is that of 6-phosphofructo-2-kinase/fructose-2,6-bisphosphatase from Caenorhabditis elegans.